Reading from the N-terminus, the 136-residue chain is Large ribosomal subunit protein uL16c (136 aa).

It belongs to the universal ribosomal protein uL16 family. Part of the 50S ribosomal subunit.

It localises to the plastid. The protein resides in the chloroplast. In Citrus sinensis (Sweet orange), this protein is Large ribosomal subunit protein uL16c.